Consider the following 225-residue polypeptide: MKHLFKLDPAKNLPRNSVTKLIHSGTDGFIIGGTDNLEIEAVENLYELLAETDLPIFLEVSDESMILPEAEHFLIPVVLNTENSKWTHGLHKELIKELGDFIPWKRITSEGYVILNKDAKVAQLTEAKTDLTDEDIIAYARLAENIFRLPIFYVEYSGMYGDPEAVRKVSEVLSDTEFWYGGGIRSKEQAAEMAKYADTIIVGNIIYEDLEKALETATIFRKKTV.

Lysine 6 provides a ligand contact to sn-glycerol 1-phosphate. Residues aspartate 8 and threonine 34 each contribute to the Mg(2+) site. Sn-glycerol 1-phosphate-binding positions include 153 to 158 (YVEYSG), glycine 183, and 203 to 204 (GN).

Belongs to the GGGP/HepGP synthase family. Group I subfamily. In terms of assembly, homodimer. Mg(2+) serves as cofactor.

The enzyme catalyses sn-glycerol 1-phosphate + all-trans-heptaprenyl diphosphate = 3-heptaprenyl-sn-glycero-1-phosphate + diphosphate. The protein operates within membrane lipid metabolism; glycerophospholipid metabolism. Prenyltransferase that catalyzes in vivo the transfer of the heptaprenyl moiety of heptaprenyl pyrophosphate (HepPP; 35 carbon atoms) to the C3 hydroxyl of sn-glycerol-1-phosphate (G1P), producing heptaprenylglyceryl phosphate (HepGP). This reaction is an ether-bond-formation step in the biosynthesis of archaea-type G1P-based membrane lipids found in Bacillales. The protein is Heptaprenylglyceryl phosphate synthase of Listeria innocua serovar 6a (strain ATCC BAA-680 / CLIP 11262).